A 932-amino-acid polypeptide reads, in one-letter code: Serine/threonine-protein kinase PknD (932 aa).

A Protein kinase domain is found at 4–291; that stretch reads YDIVRIIGKG…ELKEDIESHL (288 aa). Residues 10–18 and K33 contribute to the ATP site; that span reads IGKGGMGEV. The Proton acceptor role is filled by D138.

It belongs to the protein kinase superfamily. Ser/Thr protein kinase family. In terms of processing, autophosphorylated on serine and threonine residues.

The catalysed reaction is L-seryl-[protein] + ATP = O-phospho-L-seryl-[protein] + ADP + H(+). It catalyses the reaction L-threonyl-[protein] + ATP = O-phospho-L-threonyl-[protein] + ADP + H(+). Functionally, together with the serine/threonine kinase Pkn1, may play a role in the specific interactions with host proteins during intracellular growth. The protein is Serine/threonine-protein kinase PknD of Chlamydia pneumoniae (Chlamydophila pneumoniae).